Reading from the N-terminus, the 331-residue chain is Glyceraldehyde-3-phosphate dehydrogenase, cytosolic (331 aa).

Residues 12-13 (RI), Asp34, and Arg78 each bind NAD(+). D-glyceraldehyde 3-phosphate is bound by residues 149-151 (SCT), Thr180, 209-210 (TG), and Arg232. Cys150 (nucleophile) is an active-site residue. An NAD(+)-binding site is contributed by Asn314.

The protein belongs to the glyceraldehyde-3-phosphate dehydrogenase family. In terms of assembly, homotetramer.

It localises to the cytoplasm. It catalyses the reaction D-glyceraldehyde 3-phosphate + phosphate + NAD(+) = (2R)-3-phospho-glyceroyl phosphate + NADH + H(+). It functions in the pathway carbohydrate degradation; glycolysis; pyruvate from D-glyceraldehyde 3-phosphate: step 1/5. This chain is Glyceraldehyde-3-phosphate dehydrogenase, cytosolic, found in Trypanosoma brucei brucei.